Reading from the N-terminus, the 153-residue chain is Endoribonuclease YbeY (153 aa).

3 residues coordinate Zn(2+): His114, His118, and His124.

It belongs to the endoribonuclease YbeY family. Requires Zn(2+) as cofactor.

The protein localises to the cytoplasm. Single strand-specific metallo-endoribonuclease involved in late-stage 70S ribosome quality control and in maturation of the 3' terminus of the 16S rRNA. The polypeptide is Endoribonuclease YbeY (Finegoldia magna (strain ATCC 29328 / DSM 20472 / WAL 2508) (Peptostreptococcus magnus)).